A 143-amino-acid chain; its full sequence is UPF0251 protein CA_C3166 (143 aa).

It belongs to the UPF0251 family.

This is UPF0251 protein CA_C3166 from Clostridium acetobutylicum (strain ATCC 824 / DSM 792 / JCM 1419 / IAM 19013 / LMG 5710 / NBRC 13948 / NRRL B-527 / VKM B-1787 / 2291 / W).